Reading from the N-terminus, the 704-residue chain is Glycogen [starch] synthase, liver (704 aa).

Phosphoserine occurs at positions 8 and 11. Residue K40 coordinates UDP. The UDP-alpha-D-glucose site is built by H205 and R211. Alpha-D-glucose 6-phosphate contacts are provided by H291, E292, Q294, H297, and K301. R331 contacts UDP. R331 contributes to the UDP-alpha-D-glucose binding site. Alpha-D-glucose 6-phosphate is bound at residue H501. E510, W512, and G513 together coordinate UDP-alpha-D-glucose. Residue T515 participates in UDP binding. The alpha-D-glucose 6-phosphate site is built by R582 and R586. Residues 620–704 (KFHLEPTSPP…KKKLHGEYKN (85 aa)) are disordered. S627 is modified (phosphoserine). A phosphoserine; by GSK3-alpha and GSK3-beta mark is found at S641, S645, S649, and S653. Positions 647–657 (SGSQTSSPQSS) are enriched in low complexity. S657 carries the post-translational modification Phosphoserine; by CK2. A compositionally biased stretch (acidic residues) spans 659 to 675 (VENEGDEDERYDEEEEA). S684 is modified (phosphoserine).

The protein belongs to the glycosyltransferase 3 family. As to quaternary structure, part of the glycogen synthase (GS)-glycogenin complex, a heterooctamer composed of a tetramer of GS and 2 dimers of glycogenin, where each GS protomer binds to one glycogenin subunit (via glycogenin C-terminus); the GS tetramer may dissociate from glycogenin dimers to continue glycogen polymerization on its own. May also form a heterooctamer complex with GYG1 (via GYG1 C-terminus). Post-translationally, primed phosphorylation at Ser-657 (site 5) by CSNK2A1 and CSNK2A2 is required for inhibitory phosphorylation at Ser-641 (site 3a), Ser-645 (site 3b), Ser-649 (site 3c) and Ser-653 (site 4) by GSK3A an GSK3B. Dephosphorylation at Ser-641 and Ser-645 by PP1 activates the enzyme. Phosphorylation at Ser-8 is not required for interaction with GYG1. Interaction with GYG1 does not regulate the phosphorylation at Ser-8 and Ser-641. As to expression, specifically expressed in liver (at protein level).

The enzyme catalyses [(1-&gt;4)-alpha-D-glucosyl](n) + UDP-alpha-D-glucose = [(1-&gt;4)-alpha-D-glucosyl](n+1) + UDP + H(+). It participates in glycan biosynthesis; glycogen biosynthesis. Allosteric activation by glucose-6-phosphate. Phosphorylation reduces the activity towards UDP-glucose. When in the non-phosphorylated state, glycogen synthase does not require glucose-6-phosphate as an allosteric activator; when phosphorylated it does. Glycogen synthase participates in the glycogen biosynthetic process along with glycogenin and glycogen branching enzyme. Extends the primer composed of a few glucose units formed by glycogenin by adding new glucose units to it. In this context, glycogen synthase transfers the glycosyl residue from UDP-Glc to the non-reducing end of alpha-1,4-glucan. This is Glycogen [starch] synthase, liver from Rattus norvegicus (Rat).